The following is a 327-amino-acid chain: Undecaprenyl-phosphate 4-deoxy-4-formamido-L-arabinose transferase (327 aa).

Topologically, residues 1-235 are cytoplasmic; it reads MFDAAPIKKV…TCLTTTPLRL (235 aa). The helical transmembrane segment at 236 to 256 threads the bilayer; the sequence is LSLLGSVIAIGGFSLSVLLIV. Residues 257–269 are Periplasmic-facing; it reads LRLALGPQWAAEG. The helical transmembrane segment at 270–290 threads the bilayer; it reads VFMLFAVLFTFIGAQFIGMGL. Topologically, residues 291–327 are cytoplasmic; sequence LGEYIGRIYNDVRARPRYFVQQVIYPESTSFTEESHQ.

Belongs to the glycosyltransferase 2 family.

Its subcellular location is the cell inner membrane. It catalyses the reaction UDP-4-deoxy-4-formamido-beta-L-arabinose + di-trans,octa-cis-undecaprenyl phosphate = 4-deoxy-4-formamido-alpha-L-arabinopyranosyl di-trans,octa-cis-undecaprenyl phosphate + UDP. It participates in glycolipid biosynthesis; 4-amino-4-deoxy-alpha-L-arabinose undecaprenyl phosphate biosynthesis; 4-amino-4-deoxy-alpha-L-arabinose undecaprenyl phosphate from UDP-4-deoxy-4-formamido-beta-L-arabinose and undecaprenyl phosphate: step 1/2. The protein operates within bacterial outer membrane biogenesis; lipopolysaccharide biosynthesis. Functionally, catalyzes the transfer of 4-deoxy-4-formamido-L-arabinose from UDP to undecaprenyl phosphate. The modified arabinose is attached to lipid A and is required for resistance to polymyxin and cationic antimicrobial peptides. The polypeptide is Undecaprenyl-phosphate 4-deoxy-4-formamido-L-arabinose transferase (Salmonella paratyphi A (strain ATCC 9150 / SARB42)).